The sequence spans 208 residues: FMN-dependent NADH:quinone oxidoreductase 2 (208 aa).

It belongs to the azoreductase type 1 family. Homodimer. FMN is required as a cofactor.

The enzyme catalyses 2 a quinone + NADH + H(+) = 2 a 1,4-benzosemiquinone + NAD(+). The catalysed reaction is N,N-dimethyl-1,4-phenylenediamine + anthranilate + 2 NAD(+) = 2-(4-dimethylaminophenyl)diazenylbenzoate + 2 NADH + 2 H(+). Quinone reductase that provides resistance to thiol-specific stress caused by electrophilic quinones. In terms of biological role, also exhibits azoreductase activity. Catalyzes the reductive cleavage of the azo bond in aromatic azo compounds to the corresponding amines. In Bacillus cereus (strain ATCC 10987 / NRS 248), this protein is FMN-dependent NADH:quinone oxidoreductase 2.